Consider the following 833-residue polypeptide: DNA gyrase subunit A (833 aa).

The 464-residue stretch at 35 to 498 (LPDVRDGMKP…SEDMFEDEDL (464 aa)) folds into the Topo IIA-type catalytic domain. The O-(5'-phospho-DNA)-tyrosine intermediate role is filled by Tyr123. Positions 525–531 (QKRGGRG) match the GyrA-box motif. A disordered region spans residues 803–833 (RVDIEDDELDEDESIEEERDDRSEVEQGENE). A compositionally biased stretch (acidic residues) spans 806–821 (IEDDELDEDESIEEER).

The protein belongs to the type II topoisomerase GyrA/ParC subunit family. As to quaternary structure, heterotetramer, composed of two GyrA and two GyrB chains. In the heterotetramer, GyrA contains the active site tyrosine that forms a transient covalent intermediate with DNA, while GyrB binds cofactors and catalyzes ATP hydrolysis.

The protein localises to the cytoplasm. The catalysed reaction is ATP-dependent breakage, passage and rejoining of double-stranded DNA.. Functionally, a type II topoisomerase that negatively supercoils closed circular double-stranded (ds) DNA in an ATP-dependent manner to modulate DNA topology and maintain chromosomes in an underwound state. Negative supercoiling favors strand separation, and DNA replication, transcription, recombination and repair, all of which involve strand separation. Also able to catalyze the interconversion of other topological isomers of dsDNA rings, including catenanes and knotted rings. Type II topoisomerases break and join 2 DNA strands simultaneously in an ATP-dependent manner. In Halalkalibacterium halodurans (strain ATCC BAA-125 / DSM 18197 / FERM 7344 / JCM 9153 / C-125) (Bacillus halodurans), this protein is DNA gyrase subunit A.